The primary structure comprises 364 residues: TD and POZ domain-containing protein 2 (364 aa).

One can recognise an MATH domain in the interval 19-149 (EFCYEWTISN…KDKLTLCCKV (131 aa)). Residues 188–255 (TDCSLLVAGH…IYTGKAPTLH (68 aa)) form the BTB domain.

This sequence belongs to the Tdpoz family.

This Mus musculus (Mouse) protein is TD and POZ domain-containing protein 2.